The sequence spans 271 residues: Plasmanylethanolamine desaturase 1 (271 aa).

The next 3 helical transmembrane spans lie at 48 to 68 (WCCV…LLLL), 75 to 95 (PLVM…SGLV), and 162 to 182 (VLEQ…FGTF). Residues 187–191 (HKWSH) carry the Histidine box-1 motif. The short motif at 214-218 (HHRIH) is the Histidine box-2 element.

The protein belongs to the fatty acid desaturase CarF family.

Its subcellular location is the endoplasmic reticulum membrane. It catalyses the reaction a 1-(1,2-saturated alkyl)-2-acyl-sn-glycero-3-phosphoethanolamine + 2 Fe(II)-[cytochrome b5] + O2 + 2 H(+) = a 1-O-(1Z-alkenyl)-2-acyl-sn-glycero-3-phosphoethanolamine + 2 Fe(III)-[cytochrome b5] + 2 H2O. The catalysed reaction is a 1-O-hexadecyl-2-acyl-sn-glycero-3-phosphoethanolamine + 2 Fe(II)-[cytochrome b5] + O2 + 2 H(+) = a 1-O-(1Z-hexadecenyl)-2-acyl-sn-glycero-3-phosphoethanolamine + 2 Fe(III)-[cytochrome b5] + 2 H2O. The enzyme catalyses a 1-O-octadecyl-2-acyl-sn-glycero-3-phosphoethanolamine + 2 Fe(II)-[cytochrome b5] + O2 + 2 H(+) = a 1-O-(1Z-octadecenyl)-2-acyl-sn-glycero-3-phosphoethanolamine + 2 Fe(III)-[cytochrome b5] + 2 H2O. It carries out the reaction a 1-O-(9Z-octadecenyl)-2-acyl-sn-glycero-3-phosphoethanolamine + 2 Fe(II)-[cytochrome b5] + O2 + 2 H(+) = a 1-O-(1Z,9Z-octadecadienyl)-2-acyl-sn-glycero-3-phosphoethanolamine + 2 Fe(III)-[cytochrome b5] + 2 H2O. It functions in the pathway lipid metabolism; fatty acid metabolism. Its function is as follows. Plasmanylethanolamine desaturase involved in plasmalogen biogenesis in the endoplasmic reticulum membrane. Plasmalogens are glycerophospholipids with a hydrocarbon chain linked by a vinyl ether bond at the glycerol sn-1 position, and are involved in antioxidative and signaling mechanisms. This Bos taurus (Bovine) protein is Plasmanylethanolamine desaturase 1.